The chain runs to 211 residues: Cell division protein SepF (211 aa).

The segment covering 15–26 (DTDEVNEVEEEV) has biased composition (acidic residues). The disordered stretch occupies residues 15-111 (DTDEVNEVEE…ETYQAQTTVQ (97 aa)). Polar residues-rich tracts occupy residues 44–57 (IPSQ…QNPA), 64–81 (ARSQ…PNRQ), and 91–111 (RESV…TTVQ).

This sequence belongs to the SepF family. As to quaternary structure, homodimer. Interacts with FtsZ.

It is found in the cytoplasm. Cell division protein that is part of the divisome complex and is recruited early to the Z-ring. Probably stimulates Z-ring formation, perhaps through the cross-linking of FtsZ protofilaments. Its function overlaps with FtsA. This chain is Cell division protein SepF, found in Streptococcus uberis (strain ATCC BAA-854 / 0140J).